Here is a 342-residue protein sequence, read N- to C-terminus: Nucleoid-associated protein Sputcn32_2288 (342 aa).

This sequence belongs to the YejK family.

Its subcellular location is the cytoplasm. It localises to the nucleoid. This chain is Nucleoid-associated protein Sputcn32_2288, found in Shewanella putrefaciens (strain CN-32 / ATCC BAA-453).